A 449-amino-acid chain; its full sequence is MAHISFDSSNVADFVHENELAEIQPLVTAADQILRDGSGAGSDFRGWIDLPSNYDKDEFARIKKAADKIRNDSEVFVAIGIGGSYLGARAAIDFLNNTFYNLLTKEQRNGAPQVIFAGNSISSTYLADVLNLIGDRDFSINVISKSGTTTEPAIAFRVLKEKLIKKYGEEEAKKRIYATTDRAKGALKTEADAENYEEFVVPDDIGGRFSVLSAVGLLPIAVAGGDIDQLMKGAEDASNEYKDADVTKNEAYKYAALRNILYRKGYTTELLENYEPTLQYFGEWWKQLMGESEGKDQKGIYPSSANFSTDLHSLGQYIQEGRRNLMETVINVEKPNHDIDIPKADQDLDGLRYLEGRTMDEVNKKAYQGVTLAHNDGGVPVMTVNIPDQTAYTLGYMIYFFEAAVAVSGYLNGINPFNQPGVEAYKSNMFALLGKPGYEDKTAELNARL.

The active-site Proton donor is Glu291. Residues His312 and Lys426 contribute to the active site.

Belongs to the GPI family.

It localises to the cytoplasm. The catalysed reaction is alpha-D-glucose 6-phosphate = beta-D-fructose 6-phosphate. It functions in the pathway carbohydrate biosynthesis; gluconeogenesis. The protein operates within carbohydrate degradation; glycolysis; D-glyceraldehyde 3-phosphate and glycerone phosphate from D-glucose: step 2/4. In terms of biological role, catalyzes the reversible isomerization of glucose-6-phosphate to fructose-6-phosphate. The sequence is that of Glucose-6-phosphate isomerase from Pediococcus pentosaceus (strain ATCC 25745 / CCUG 21536 / LMG 10740 / 183-1w).